The sequence spans 205 residues: Recombination protein RecR (205 aa).

Residues 60–75 (CKVCHNISDTETCQIC) form a C4-type zinc finger. One can recognise a Toprim domain in the interval 83 to 178 (SMVCVVENIR…KLSVLARGVS (96 aa)).

This sequence belongs to the RecR family.

In terms of biological role, may play a role in DNA repair. It seems to be involved in an RecBC-independent recombinational process of DNA repair. It may act with RecF and RecO. The chain is Recombination protein RecR from Bacteroides fragilis (strain ATCC 25285 / DSM 2151 / CCUG 4856 / JCM 11019 / LMG 10263 / NCTC 9343 / Onslow / VPI 2553 / EN-2).